A 651-amino-acid polypeptide reads, in one-letter code: E3 SUMO-protein ligase PIAS1 (651 aa).

Ala2 carries the post-translational modification N-acetylalanine. Residues 2–200 are required for interaction with MSX1; that stretch reads ADSAELKQMV…KCDFTVQVQL (199 aa). The region spanning 11 to 45 is the SAP domain; the sequence is VMSLRVSELQVLLGYAGRNKHGRKHELLTKALHLL. Positions 19 to 23 match the LXXLL motif motif; it reads LQVLL. Residues Lys40 and Lys46 each participate in a glycyl lysine isopeptide (Lys-Gly) (interchain with G-Cter in SUMO2) cross-link. Positions 56-64 match the Nuclear localization signal motif; that stretch reads KIKELYRRR. Positions 124 to 288 constitute a PINIT domain; sequence HLTSALHPVH…SMAVYLVKQL (165 aa). Glycyl lysine isopeptide (Lys-Gly) (interchain with G-Cter in SUMO2) cross-links involve residues Lys137 and Lys238. The SP-RING-type zinc finger occupies 320–405; it reads PDSEIATTSL…LKYCTDCDEI (86 aa). Zn(2+) contacts are provided by Cys351, His353, Cys374, and Cys377. A Nuclear localization signal motif is present at residues 368-380; it reads KKPTWVCPVCDKK. Lys453 participates in a covalent cross-link: Glycyl lysine isopeptide (Lys-Gly) (interchain with G-Cter in SUMO2). Positions 462–473 are SUMO1-binding; that stretch reads LTIDSSSDEEEE. The interval 465–511 is disordered; that stretch reads DSSSDEEEEEPPAKRTCPSLSPTSPLSNKGILSLPHQASPVSRTPSL. Residues Ser467, Ser468, Ser483, and Ser485 each carry the phosphoserine modification. Low complexity predominate over residues 482–491; that stretch reads PSLSPTSPLS. Thr487 is subject to Phosphothreonine. A phosphoserine mark is found at Ser488 and Ser491. Residue Lys493 forms a Glycyl lysine isopeptide (Lys-Gly) (interchain with G-Cter in SUMO2) linkage. Residues Ser503, Ser510, and Ser522 each carry the phosphoserine modification. Tandem repeats lie at residues 520–523 and 557–560. A 4 X 4 AA repeats of N-T-S-L region spans residues 520 to 615; it reads NTSLIQDYRH…GSSSGSNSSL (96 aa). The 3; approximate repeat unit spans residues 598 to 601; the sequence is STSL. Residues 600–630 are disordered; that stretch reads SLPATNGSSSGSNSSLVSSNSLRESHGHGVA. Positions 605 to 621 are enriched in low complexity; the sequence is NGSSSGSNSSLVSSNSL. One copy of the 4; approximate repeat lies at 612–615; it reads NSSL.

This sequence belongs to the PIAS family. In terms of assembly, interacts with NR2C1; the interaction promotes its sumoylation. Interacts with DDX21, CSRP2, AXIN1, JUN, SATB2, PLAG1, TP53 and STAT1 (dimer), following IFNA1-stimulation. Interacts with SP3 (preferentially when SUMO-modified). Interacts with KLF8; the interaction results in SUMO ligation and repression of KLF8 transcriptional activity and of its cell cycle progression into G(1) phase. Interacts with CHUK/IKKA; this interaction induces PIAS1 phosphorylation. Interacts with PTK2/FAK1; the interaction promotes its sumoylation. Interacts with SUMO1, UBE2I, NCOA2 and AR. Interacts with NR2C1; the interaction promotes its sumoylation. Interacts with DDX5. Interacts with MTA1. Interacts with PML (isoform PML-12). Interacts with PRDM1. Interacts (via N-terminus) with MSX1 (via C-terminus); the interaction is required for the localization of both proteins to the nuclear periphery and specific binding of MSX1 to the core enhancer region in target gene promoters. Post-translationally, sumoylated. Expressed in kidney, heart, spleen, brain and cerebellum; weak expression, if any, in liver and lung.

It is found in the nucleus. The protein resides in the nucleus speckle. It localises to the PML body. Its subcellular location is the cytoplasm. The protein localises to the cytoskeleton. The enzyme catalyses S-ubiquitinyl-[E2 ubiquitin-conjugating enzyme]-L-cysteine + [acceptor protein]-L-lysine = [E2 ubiquitin-conjugating enzyme]-L-cysteine + N(6)-ubiquitinyl-[acceptor protein]-L-lysine.. It participates in protein modification; protein sumoylation. Its function is as follows. Functions as an E3-type small ubiquitin-like modifier (SUMO) ligase, stabilizing the interaction between UBE2I and the substrate, and as a SUMO-tethering factor. Catalyzes sumoylation of various proteins, such as CEBPB, MRE11, MTA1, PTK2 and PML. Plays a crucial role as a transcriptional coregulation in various cellular pathways, including the STAT pathway, the p53 pathway and the steroid hormone signaling pathway. In vitro, binds A/T-rich DNA. The effects of this transcriptional coregulation, transactivation or silencing, may vary depending upon the biological context. Mediates sumoylation of MRE11, stabilizing MRE11 on chromatin during end resection. Sumoylates PML (at 'Lys-65' and 'Lys-160') and PML-RAR and promotes their ubiquitin-mediated degradation. PIAS1-mediated sumoylation of PML promotes its interaction with CSNK2A1/CK2 which in turn promotes PML phosphorylation and degradation. Enhances the sumoylation of MTA1 and may participate in its paralog-selective sumoylation. Plays a dynamic role in adipogenesis by promoting the SUMOylation and degradation of CEBPB. Mediates the nuclear mobility and localization of MSX1 to the nuclear periphery, whereby MSX1 is brought into the proximity of target myoblast differentiation factor genes. Also required for the binding of MSX1 to the core enhancer region in target gene promoter regions, independent of its sumoylation activity. Capable of binding to the core enhancer region TAAT box in the MYOD1 gene promoter. The polypeptide is E3 SUMO-protein ligase PIAS1 (Pias1) (Mus musculus (Mouse)).